The sequence spans 370 residues: Queuine tRNA-ribosyltransferase (370 aa).

Asp-89 (proton acceptor) is an active-site residue. Substrate-binding positions include 89-93, Asp-143, and Gly-214; that span reads DSGGF. The RNA binding stretch occupies residues 245-251; it reads GVGKPED. Asp-264 serves as the catalytic Nucleophile. Residues 269–273 form an RNA binding; important for wobble base 34 recognition region; sequence TRNAR. Residues Cys-302, Cys-304, Cys-307, and His-333 each contribute to the Zn(2+) site.

Belongs to the queuine tRNA-ribosyltransferase family. Homodimer. Within each dimer, one monomer is responsible for RNA recognition and catalysis, while the other monomer binds to the replacement base PreQ1. Zn(2+) serves as cofactor.

It carries out the reaction 7-aminomethyl-7-carbaguanine + guanosine(34) in tRNA = 7-aminomethyl-7-carbaguanosine(34) in tRNA + guanine. The protein operates within tRNA modification; tRNA-queuosine biosynthesis. Catalyzes the base-exchange of a guanine (G) residue with the queuine precursor 7-aminomethyl-7-deazaguanine (PreQ1) at position 34 (anticodon wobble position) in tRNAs with GU(N) anticodons (tRNA-Asp, -Asn, -His and -Tyr). Catalysis occurs through a double-displacement mechanism. The nucleophile active site attacks the C1' of nucleotide 34 to detach the guanine base from the RNA, forming a covalent enzyme-RNA intermediate. The proton acceptor active site deprotonates the incoming PreQ1, allowing a nucleophilic attack on the C1' of the ribose to form the product. After dissociation, two additional enzymatic reactions on the tRNA convert PreQ1 to queuine (Q), resulting in the hypermodified nucleoside queuosine (7-(((4,5-cis-dihydroxy-2-cyclopenten-1-yl)amino)methyl)-7-deazaguanosine). The sequence is that of Queuine tRNA-ribosyltransferase from Buchnera aphidicola subsp. Acyrthosiphon pisum (strain 5A).